The primary structure comprises 35 residues: Photosystem II reaction center protein T (35 aa).

A helical transmembrane segment spans residues 3 to 23 (ALVYTFLLVSTLGIIFFAIFF).

It belongs to the PsbT family. PSII is composed of 1 copy each of membrane proteins PsbA, PsbB, PsbC, PsbD, PsbE, PsbF, PsbH, PsbI, PsbJ, PsbK, PsbL, PsbM, PsbT, PsbY, PsbZ, Psb30/Ycf12, at least 3 peripheral proteins of the oxygen-evolving complex and a large number of cofactors. It forms dimeric complexes.

The protein localises to the plastid. The protein resides in the chloroplast thylakoid membrane. In terms of biological role, found at the monomer-monomer interface of the photosystem II (PS II) dimer, plays a role in assembly and dimerization of PSII. PSII is a light-driven water plastoquinone oxidoreductase, using light energy to abstract electrons from H(2)O, generating a proton gradient subsequently used for ATP formation. The polypeptide is Photosystem II reaction center protein T (Citrus sinensis (Sweet orange)).